The following is a 118-amino-acid chain: Acidic phospholipase A2 homolog (118 aa).

7 cysteine pairs are disulfide-bonded: Cys11-Cys70, Cys25-Cys117, Cys27-Cys43, Cys42-Cys98, Cys49-Cys91, Cys59-Cys84, and Cys77-Cys89.

Belongs to the phospholipase A2 family. Group I subfamily. A49 sub-subfamily. Expressed by the venom gland.

Its subcellular location is the secreted. Its function is as follows. Snake venom phospholipase A2 (PLA2) homolog that lacks both catalytic and neurotoxicity activities. The chain is Acidic phospholipase A2 homolog from Bungarus fasciatus (Banded krait).